The chain runs to 113 residues: Transmembrane protein 256 (113 aa).

The N-terminal stretch at 1-29 is a signal peptide; the sequence is MAGPGAAFRRLGALSGAGALGLASYGAHG. Topologically, residues 30-63 are extracellular; the sequence is AQFPDAYGKELFDKTNKHHFLHSLALLAVPLCRK. Lysine 43 is subject to N6-acetyllysine. A helical transmembrane segment spans residues 64–84; it reads PLWAGLLLASGTTLFCTTFYY. At 85–92 the chain is on the cytoplasmic side; the sequence is QALSGDPS. Residues 93–113 traverse the membrane as a helical segment; that stretch reads FQNLAPVGGSLLLLGWLALAL.

This sequence belongs to the TMEM256 family.

The protein localises to the membrane. This is Transmembrane protein 256 (TMEM256) from Bos taurus (Bovine).